A 503-amino-acid chain; its full sequence is 5'-3' exonuclease PLD4 (503 aa).

Residues 1-36 (MDKKKEHPEMRIPLQTAVEVSDWPCSTSHDPHSGLG) lie on the Cytoplasmic side of the membrane. Residues 37–57 (MVLGMLAVLGLSSVTLILFLW) traverse the membrane as a signal-anchor for type II membrane protein segment. Topologically, residues 58–503 (QGATSFTSHR…RQVPSQDCVW (446 aa)) are lumenal. Residues Asn-89, Asn-148, and Asn-169 are each glycosylated (N-linked (GlcNAc...) asparagine). A disulfide bridge links Cys-92 with Cys-248. The region spanning 207–234 (TGGVLHSKFWVVDGRHIYVGSANMDWRS) is the PLD phosphodiesterase 1 domain. Catalysis depends on residues His-212, Lys-214, and Asp-219. The active-site Proton donor is His-212. Residues Asn-247, Asn-279, Asn-415, and Asn-425 are each glycosylated (N-linked (GlcNAc...) asparagine). The cysteines at positions 377 and 501 are disulfide-linked. Residues 421–447 (FSRVNHSKFMVTDKTAYVGTSNWSEDY) form the PLD phosphodiesterase 2 domain. Residues His-426, Lys-428, and Asp-433 contribute to the active site. His-426 (nucleophile) is an active-site residue. N-linked (GlcNAc...) asparagine glycosylation is present at Asn-442.

The protein belongs to the phospholipase D family. Highly N-glycosylated. In terms of tissue distribution, enriched in the white matter of early postnatal brains, as well as in splenic marginal zone cells. Highly expressed in dendritic cells (DCs) and other myeloid cells, with lower expression in B cell.

The protein localises to the endoplasmic reticulum membrane. The protein resides in the golgi apparatus. It is found in the trans-Golgi network membrane. Its subcellular location is the nucleus. It localises to the early endosome. The protein localises to the cytoplasmic vesicle. The protein resides in the phagosome. It is found in the lysosome. The catalysed reaction is Exonucleolytic cleavage in the 5'- to 3'-direction to yield nucleoside 3'-phosphates.. It catalyses the reaction a 5'-end 5'-dephospho-ribonucleotidyl-ribonucleotide-RNA + H2O = a ribonucleoside 3'-phosphate + a 5'-end dephospho-ribonucleoside-RNA + H(+). It carries out the reaction a ribonucleoside 3'-phosphate-2'-3'-cyclophospho-GMP + H2O = a ribonucleoside 3'-phosphate + 2',3'-cyclophospho-GMP + H(+). The enzyme catalyses a 5'-end 5'-dephospho-2'-deoxyribonucleotidyl-2'-deoxyribonucleotide in single-stranded DNA + H2O = a 5'-end dephospho-2'-deoxyribonucleoside in single-stranded DNA + a 2'-deoxyribonucleoside 3'-phosphate + H(+). The catalysed reaction is a 5'-end 5'-phospho-2'-deoxyribonucleotide in single-stranded DNA + H2O = a 5'-end 5'-dephospho-2'-deoxyribonucleotide in single-stranded DNA + phosphate. It catalyses the reaction a 3-lyso-sn-glycero-1-phospho-(3'-acyl-1'-sn-glycerol) + a 1-acyl-sn-glycerol = a 3-acyl-sn-glycero-1-phospho-(3'-acyl-1'-sn-glycerol) + glycerol. It carries out the reaction 3-lyso-sn-glycero-1-phospho-(3'-(9Z-octadecenoyl)-1'-sn-glycerol) + 1-(9Z-octadecenoyl)-sn-glycerol = 3-(9Z-octadecenoyl)-sn-glycero-1-phospho-(3'-(9Z-octadecenoyl)-1'-sn-glycerol) + glycerol. Its activity is regulated as follows. The exonuclease activity toward ssDNA substrate is Ca(2+) and Mg(2+)-independent, but it is inhibited by Fe(2+), Cu(2+) and to a lesser extent Zn(2+) ions. Functionally, 5'-&gt;3' exonuclease that hydrolyzes the phosphodiester bond of single-stranded DNA (ssDNA) and RNA molecules to form nucleoside 3'-monophosphates and 5'-end 5'-hydroxy deoxyribonucleotide/ribonucleotide fragments. Partially redundant with PLD4, can cleave all four nucleotides displaying higher efficiency for ssDNA and RNA fragments initiated with uridine and guanosine residues and lower efficiency for cytidine-initiated substrates. As a result, it does not always degrade polynucleotides to the single nucleotide level, it can stall at specific sites sparing certain fragments from exonucleolytic degradation. Processes self and pathogenic ssDNA and RNA molecules that reach the endolysosomal compartment via phagocytosis or autophagy and may serve as 'danger' signals for recognition by innate immune receptors such as toll-like receptors (TLRs). Degrades mitochondrial CpG-rich ssDNA fragments to prevent TLR9 activation and autoinflammatory response, but it can cleave viral RNA to generate ligands for TLR7 activation and initiate antiviral immune responses. In plasmacytoid dendritic cells, it cooperates with endonuclease RNASET2 to release 2',3'-cyclic guanosine monophosphate (2',3'-cGMP), a potent stimulatory ligand for TLR7. Produces 2',3'-cGMPs and cytidine-rich RNA fragments that occupy TLR7 ligand-binding pockets and trigger a signaling-competent state. Can exert polynucleotide phosphatase activity toward 5'-phosphorylated ssDNA substrates although at a slow rate. Transphosphatidylase that catalyzes the exchange with R to S stereo-inversion of the glycerol moiety between (S,R)-lysophosphatidylglycerol (LPG) and monoacylglycerol (MAG) substrates to yield (S,S)-bis(monoacylglycero)phosphate (BMP). Can synthesize a variety of (S,S)-BMPs representing the main phospholipid constituent of lysosomal intralumenal vesicle (ILV) membranes that bind acid hydrolases for lipid degradation. Regulates the homeostasis and interorganellar communication of the endolysosomal system with an overall impact on cellular removal of dysfunctional organelles via autophagy as well as proper protein and lipid turnover. May play a role in myotube formation in response to ER stress. The protein is 5'-3' exonuclease PLD4 of Mus musculus (Mouse).